The primary structure comprises 588 residues: Sulfite reductase [NADPH] hemoprotein beta-component (588 aa).

Residues 1–10 (MSDKKQKGLE) show a composition bias toward basic and acidic residues. The disordered stretch occupies residues 1-20 (MSDKKQKGLEWQDNPLSDNE). [4Fe-4S] cluster contacts are provided by Cys443, Cys449, Cys488, and Cys492. Position 492 (Cys492) interacts with siroheme.

Belongs to the nitrite and sulfite reductase 4Fe-4S domain family. As to quaternary structure, alpha(8)-beta(8). The alpha component is a flavoprotein, the beta component is a hemoprotein. Siroheme serves as cofactor. Requires [4Fe-4S] cluster as cofactor.

It catalyses the reaction hydrogen sulfide + 3 NADP(+) + 3 H2O = sulfite + 3 NADPH + 4 H(+). Its pathway is sulfur metabolism; hydrogen sulfide biosynthesis; hydrogen sulfide from sulfite (NADPH route): step 1/1. Its function is as follows. Component of the sulfite reductase complex that catalyzes the 6-electron reduction of sulfite to sulfide. This is one of several activities required for the biosynthesis of L-cysteine from sulfate. In Mannheimia succiniciproducens (strain KCTC 0769BP / MBEL55E), this protein is Sulfite reductase [NADPH] hemoprotein beta-component.